A 171-amino-acid chain; its full sequence is Adenine phosphoribosyltransferase (171 aa).

This sequence belongs to the purine/pyrimidine phosphoribosyltransferase family. In terms of assembly, homodimer.

It localises to the cytoplasm. It carries out the reaction AMP + diphosphate = 5-phospho-alpha-D-ribose 1-diphosphate + adenine. Its pathway is purine metabolism; AMP biosynthesis via salvage pathway; AMP from adenine: step 1/1. Catalyzes a salvage reaction resulting in the formation of AMP, that is energically less costly than de novo synthesis. In Pelotomaculum thermopropionicum (strain DSM 13744 / JCM 10971 / SI), this protein is Adenine phosphoribosyltransferase.